The sequence spans 1129 residues: DNA-directed RNA polymerase I subunit RPA2 (1129 aa).

Residues 1061-1093 (CHKCGSILAPLQRIVKRNETGGLSSQPDTCRLC) form a C4-type zinc finger.

The protein belongs to the RNA polymerase beta chain family. As to quaternary structure, component of the RNA polymerase I (Pol I) complex consisting of at least 13 subunits.

It is found in the nucleus. Its subcellular location is the nucleolus. The enzyme catalyses RNA(n) + a ribonucleoside 5'-triphosphate = RNA(n+1) + diphosphate. DNA-dependent RNA polymerase catalyzes the transcription of DNA into RNA using the four ribonucleoside triphosphates as substrates. Second largest core component of RNA polymerase I which synthesizes ribosomal RNA precursors. Proposed to contribute to the polymerase catalytic activity and forms the polymerase active center together with the largest subunit. Pol I is composed of mobile elements and RPA2 is part of the core element with the central large cleft and probably a clamp element that moves to open and close the cleft. In Drosophila melanogaster (Fruit fly), this protein is DNA-directed RNA polymerase I subunit RPA2.